Consider the following 351-residue polypeptide: uncharacterized protein (351 aa).

The segment at 25–67 is disordered; that stretch reads KKAETETLPPANSQPAAPAPEAKPTEAPVAKAEAKPETPAQPV. The span at 33-55 shows a compositional bias: low complexity; it reads PPANSQPAAPAPEAKPTEAPVAK.

This is an uncharacterized protein from Escherichia coli (strain K12).